The chain runs to 159 residues: NAD(P)H-quinone oxidoreductase subunit J, chloroplastic (159 aa).

This sequence belongs to the complex I 30 kDa subunit family. NDH is composed of at least 16 different subunits, 5 of which are encoded in the nucleus. As to expression, leaves.

It is found in the plastid. Its subcellular location is the chloroplast thylakoid membrane. It catalyses the reaction a plastoquinone + NADH + (n+1) H(+)(in) = a plastoquinol + NAD(+) + n H(+)(out). The enzyme catalyses a plastoquinone + NADPH + (n+1) H(+)(in) = a plastoquinol + NADP(+) + n H(+)(out). Its function is as follows. NDH shuttles electrons from NAD(P)H:plastoquinone, via FMN and iron-sulfur (Fe-S) centers, to quinones in the photosynthetic chain and possibly in a chloroplast respiratory chain. The immediate electron acceptor for the enzyme in this species is believed to be plastoquinone. Couples the redox reaction to proton translocation, and thus conserves the redox energy in a proton gradient. In Zea mays (Maize), this protein is NAD(P)H-quinone oxidoreductase subunit J, chloroplastic.